The primary structure comprises 305 residues: Translation initiation factor eIF2B subunit alpha (305 aa).

This sequence belongs to the eIF-2B alpha/beta/delta subunits family. In terms of assembly, component of the translation initiation factor 2B (eIF2B) complex which is a heterodecamer of two sets of five different subunits: alpha, beta, gamma, delta and epsilon. Subunits alpha, beta and delta comprise a regulatory subcomplex and subunits epsilon and gamma comprise a catalytic subcomplex. Within the complex, the hexameric regulatory complex resides at the center, with the two heterodimeric catalytic subcomplexes bound on opposite sides.

Its subcellular location is the cytoplasm. It localises to the cytosol. In terms of biological role, acts as a component of the translation initiation factor 2B (eIF2B) complex, which catalyzes the exchange of GDP for GTP on eukaryotic initiation factor 2 (eIF2) gamma subunit. Its guanine nucleotide exchange factor activity is repressed when bound to eIF2 complex phosphorylated on the alpha subunit, thereby limiting the amount of methionyl-initiator methionine tRNA available to the ribosome and consequently global translation is repressed. The sequence is that of Translation initiation factor eIF2B subunit alpha from Caenorhabditis elegans.